The primary structure comprises 512 residues: MNSASRITLFFLLTVLITQECLSSKGEDRLFRRLFRRYNQFIRPVENVSDPVTVEFEVSISQLVKVDEVNQIMETNLWLRHIWNDYKLKWLPAEFDGIEFIRVPSNKIWRPDIVLYNNAVGDFLVEDKTKALLKYDGTITWVPPAIFKSSCPMDITYFPFDYQNCSMKFGSWTYDKAKIDLVLIGSKVNLKDFWESGEWEIIDAPGYKHDIKYNCCEEIYPDITYSFYIRRLPLFYTINLIIPCLLISFLTILVFYLPSDCGEKVTLCISVLLSLTVFLLVITETIPSTSLVIPLIGEYLLFTMIFVTLSIVITVFVLNVHYRTPMTHTMPSWVRTVFLRALPRVMLMRRPIDLSESSGKGGGEIAGSSGTGGGRGAEGKKMKSSASQQGAMNSLEFGEGKAALEGKKGGCPCHPIKEAIEGDCGKVSRQLTPQAINTVVTFSVVSPEIKQAIESVKYIAENMRSRNKAKEVEDDWKYVAMVIDRIFLWVFVLVCVLGTLGLFLQPLIGFFS.

The signal sequence occupies residues 1-23 (MNSASRITLFFLLTVLITQECLS). Residues 24–242 (SKGEDRLFRR…PLFYTINLII (219 aa)) are Extracellular-facing. N-linked (GlcNAc...) asparagine glycosylation is found at asparagine 47 and asparagine 164. 2 disulfides stabilise this stretch: cysteine 151–cysteine 165 and cysteine 215–cysteine 216. A helical membrane pass occupies residues 243-258 (PCLLISFLTILVFYLP). The Cytoplasmic portion of the chain corresponds to 259–260 (SD). The helical transmembrane segment at 261 to 277 (CGEKVTLCISVLLSLTV) threads the bilayer. Glutamate 263 is a binding site for Na(+). Residues 278 to 299 (FLLVITETIPSTSLVIPLIGEY) are Extracellular-facing. A helical transmembrane segment spans residues 300-318 (LLFTMIFVTLSIVITVFVL). The Cytoplasmic portion of the chain corresponds to 319–482 (NVHYRTPMTH…EDDWKYVAMV (164 aa)). The segment at 356–389 (ESSGKGGGEIAGSSGTGGGRGAEGKKMKSSASQQ) is disordered. Residues 359–376 (GKGGGEIAGSSGTGGGRG) are compositionally biased toward gly residues. A helical membrane pass occupies residues 483–501 (IDRIFLWVFVLVCVLGTLG). Residues 502–512 (LFLQPLIGFFS) lie on the Extracellular side of the membrane.

It belongs to the ligand-gated ion channel (TC 1.A.9) family. Acetylcholine receptor (TC 1.A.9.1) subfamily. Alpha-3/CHRNA3 sub-subfamily. In terms of assembly, neuronal AChR is composed of two different types of subunits: alpha and beta. CHRNA3/Alpha-3 subunit can be combined to CHRNB2/beta-2 or CHRNB4/beta-4 to give rise to functional receptors. In terms of tissue distribution, expressed in retina and brain.

It is found in the synaptic cell membrane. It localises to the cell membrane. The protein resides in the endoplasmic reticulum. The protein localises to the golgi apparatus. It catalyses the reaction K(+)(in) = K(+)(out). The catalysed reaction is Na(+)(in) = Na(+)(out). The enzyme catalyses Ca(2+)(in) = Ca(2+)(out). Its activity is regulated as follows. Activated by a myriad of ligands such as acetylcholine, cytisine, nicotine, choline and epibatidine. The heteropentamer CHRNA3:CHRNB2 activity is blocked by alpha-conotoxins ImI, ImII, PnIA, GID and MII. The heteropentamer CHRNA3:CHRNB4 activity is blocked by the alpha-conotoxin ImI and AuIB. In terms of biological role, component of neuronal acetylcholine receptors (nAChRs) that function as pentameric, ligand-gated cation channels with high calcium permeability among other activities. nAChRs are excitatory neurotrasnmitter receptors formed by a collection of nAChR subunits known to mediate synaptic transmission in the nervous system and the neuromuscular junction. Each nAchR subunit confers differential attributes to channel properties, including activation, deactivation and desensitization kinetics, pH sensitivity, cation permeability, and binding to allosteric modulators. CHRNA3 forms heteropentameric neuronal acetylcholine receptors with CHRNB2 and CHRNB4. CHRNA3:CHRNB4 being predominant in neurons of the autonomic ganglia, it is known as ganglionic nicotinic receptor. CHRNA3:CHRNB4 also plays an important role in the habenulo-interpeduncular tract, modulating the mesolimbic dopamine system and affecting reward circuits and addiction. Hypothalamic CHRNA3:CHRNB4 nAChR activation by nicotine leads to activation of POMC neurons and a decrease in food intake. Also expressed in the urothelium where it modulates reflex bladder activity by increasing intracellular calcium through extracellular influx and basal ATP release. The chain is Neuronal acetylcholine receptor subunit alpha-3 (chrna3) from Carassius auratus (Goldfish).